Here is a 494-residue protein sequence, read N- to C-terminus: Glutamyl-tRNA(Gln) amidotransferase subunit A (494 aa).

Catalysis depends on charge relay system residues lysine 79 and serine 159. Residue serine 183 is the Acyl-ester intermediate of the active site.

The protein belongs to the amidase family. GatA subfamily. As to quaternary structure, heterotrimer of A, B and C subunits.

The catalysed reaction is L-glutamyl-tRNA(Gln) + L-glutamine + ATP + H2O = L-glutaminyl-tRNA(Gln) + L-glutamate + ADP + phosphate + H(+). In terms of biological role, allows the formation of correctly charged Gln-tRNA(Gln) through the transamidation of misacylated Glu-tRNA(Gln) in organisms which lack glutaminyl-tRNA synthetase. The reaction takes place in the presence of glutamine and ATP through an activated gamma-phospho-Glu-tRNA(Gln). This Bartonella tribocorum (strain CIP 105476 / IBS 506) protein is Glutamyl-tRNA(Gln) amidotransferase subunit A.